A 333-amino-acid polypeptide reads, in one-letter code: Quinolinate synthase (333 aa).

Iminosuccinate is bound by residues His41 and Ser58. Cys103 is a binding site for [4Fe-4S] cluster. Iminosuccinate-binding positions include 129 to 131 (YIN) and Ser146. Cys189 is a [4Fe-4S] cluster binding site. Iminosuccinate contacts are provided by residues 215 to 217 (HPE) and Thr232. [4Fe-4S] cluster is bound at residue Cys282.

This sequence belongs to the quinolinate synthase family. Type 2 subfamily. Requires [4Fe-4S] cluster as cofactor.

It is found in the cytoplasm. The enzyme catalyses iminosuccinate + dihydroxyacetone phosphate = quinolinate + phosphate + 2 H2O + H(+). Its pathway is cofactor biosynthesis; NAD(+) biosynthesis; quinolinate from iminoaspartate: step 1/1. Its function is as follows. Catalyzes the condensation of iminoaspartate with dihydroxyacetone phosphate to form quinolinate. This is Quinolinate synthase from Prochlorococcus marinus (strain MIT 9313).